The sequence spans 193 residues: Inosine triphosphate pyrophosphatase (193 aa).

An ITP-binding site is contributed by 10 to 15 (TGNANK). Glu-42 provides a ligand contact to Mg(2+). ITP contacts are provided by residues Lys-54, 70-71 (DT), Lys-87, 146-149 (FGWD), Lys-169, and 174-175 (HR).

The protein belongs to the HAM1 NTPase family. In terms of assembly, homodimer. Requires Mg(2+) as cofactor. Mn(2+) is required as a cofactor.

The protein resides in the cytoplasm. It is found in the nucleus. It carries out the reaction ITP + H2O = IMP + diphosphate + H(+). It catalyses the reaction dITP + H2O = dIMP + diphosphate + H(+). The enzyme catalyses XTP + H2O = XMP + diphosphate + H(+). Pyrophosphatase that hydrolyzes non-canonical purine nucleotides such as inosine triphosphate (ITP), deoxyinosine triphosphate (dITP) or xanthosine 5'-triphosphate (XTP) to their respective monophosphate derivatives. The enzyme does not distinguish between the deoxy- and ribose forms. Probably excludes non-canonical purines from RNA and DNA precursor pools, thus preventing their incorporation into RNA and DNA and avoiding chromosomal lesions. In Mycosarcoma maydis (Corn smut fungus), this protein is Inosine triphosphate pyrophosphatase.